A 118-amino-acid chain; its full sequence is Protein MGF 110-6L (118 aa).

The first 18 residues, 1 to 18 (MLVIFLGILGLLASQVSS), serve as a signal peptide directing secretion. Asn-96 is a glycosylation site (N-linked (GlcNAc...) asparagine; by host). Positions 115 to 118 (KDEL) match the Prevents secretion from ER motif.

The protein belongs to the asfivirus MGF 110 family. In terms of processing, N-glycosylated.

It localises to the host endoplasmic reticulum lumen. Functionally, plays a role in virus cell tropism, and may be required for efficient virus replication in macrophages. The chain is Protein MGF 110-6L from African swine fever virus (strain Badajoz 1971 Vero-adapted) (Ba71V).